The chain runs to 362 residues: Protein-arginine kinase (362 aa).

In terms of domain architecture, Phosphagen kinase C-terminal spans 24 to 255 (IVLSSRIRLA…QQLIAQERMA (232 aa)). Residues 27 to 31 (SSRIR), His-92, Arg-126, 177 to 181 (RASVM), and 208 to 213 (RGTYGE) contribute to the ATP site. The RDXXRA motif of the pArg binding pocket involved in allosteric regulation motif lies at 338–343 (RDVRRA).

The protein belongs to the ATP:guanido phosphotransferase family.

The enzyme catalyses L-arginyl-[protein] + ATP = N(omega)-phospho-L-arginyl-[protein] + ADP + H(+). With respect to regulation, appears to be allosterically activated by the binding of pArg-containing polypeptides to the pArg-binding pocket localized in the C-terminal domain of McsB. Its function is as follows. Catalyzes the specific phosphorylation of arginine residues in a large number of proteins. Is part of the bacterial stress response system. Protein arginine phosphorylation has a physiologically important role and is involved in the regulation of many critical cellular processes, such as protein homeostasis, motility, competence, and stringent and stress responses, by regulating gene expression and protein activity. The protein is Protein-arginine kinase of Geobacillus sp. (strain WCH70).